The chain runs to 904 residues: Eukaryotic translation initiation factor 3 subunit C (904 aa).

2 disordered regions span residues 1–38 (MSRF…EEED) and 156–290 (FRES…TSEK). A compositionally biased stretch (polar residues) spans 22 to 32 (IQRQTAPQFTF). The span at 161–183 (DAADDEDEEEEKKEEEESDDEEA) shows a compositional bias: acidic residues. Residues 194-206 (FKKDTVEKVKVEK) are compositionally biased toward basic and acidic residues. A compositionally biased stretch (acidic residues) spans 207-232 (DDDDSDDSIDWGQDSDSDESSSEEEA). Basic and acidic residues predominate over residues 237–247 (IRERFLKRPEK). Residues 257–272 (KEKKKTKETKDSRKKK) show a composition bias toward basic residues. A PCI domain is found at 636 to 812 (FHMHINLELL…ETVVLHRSEP (177 aa)). Positions 847-904 (RGGNQGYNRDRQNYRNQNQNRENWNNNRRQDRGNRNRNQNRDREQREQHRVEFEEKAE) are disordered. A compositionally biased stretch (low complexity) spans 860–873 (YRNQNQNRENWNNN). Over residues 874–904 (RRQDRGNRNRNQNRDREQREQHRVEFEEKAE) the composition is skewed to basic and acidic residues.

Belongs to the eIF-3 subunit C family. In terms of assembly, component of the eukaryotic translation initiation factor 3 (eIF-3) complex.

The protein localises to the cytoplasm. In terms of biological role, component of the eukaryotic translation initiation factor 3 (eIF-3) complex, which is involved in protein synthesis of a specialized repertoire of mRNAs and, together with other initiation factors, stimulates binding of mRNA and methionyl-tRNAi to the 40S ribosome. The eIF-3 complex specifically targets and initiates translation of a subset of mRNAs involved in cell proliferation. In Culex quinquefasciatus (Southern house mosquito), this protein is Eukaryotic translation initiation factor 3 subunit C.